The primary structure comprises 425 residues: ATP-dependent RNA helicase RhlB (425 aa).

The short motif at 9-37 (TRFADLALHPKIQQAISSAGFEYCTPIQA) is the Q motif element. The Helicase ATP-binding domain maps to 40 to 218 (LPVALSNRDV…YEHMNAPTKL (179 aa)). ATP is bound at residue 53–60 (AQTGTGKT). The DEAD box motif lies at 164 to 167 (DEAD). A Helicase C-terminal domain is found at 242–389 (KFPLLLTLIE…VTKYDGDALL (148 aa)). The disordered stretch occupies residues 391-425 (DLRRPRPIQRRRRHNSGGGKGKPRGRRSGPPRNAS). Basic residues predominate over residues 395-419 (PRPIQRRRRHNSGGGKGKPRGRRSG).

This sequence belongs to the DEAD box helicase family. RhlB subfamily. As to quaternary structure, component of the RNA degradosome, which is a multiprotein complex involved in RNA processing and mRNA degradation.

It localises to the cytoplasm. It catalyses the reaction ATP + H2O = ADP + phosphate + H(+). Functionally, DEAD-box RNA helicase involved in RNA degradation. Has RNA-dependent ATPase activity and unwinds double-stranded RNA. The protein is ATP-dependent RNA helicase RhlB of Idiomarina loihiensis (strain ATCC BAA-735 / DSM 15497 / L2-TR).